A 1291-amino-acid chain; its full sequence is Period circadian protein homolog 1 (1291 aa).

Residues 1–134 form a disordered region; it reads MSGPLEGADG…SSEQSARART (134 aa). The tract at residues 1–151 is interaction with BTRC; it reads MSGPLEGADG…LRELKLRLPP (151 aa). Residues 48–115 show a composition bias toward low complexity; the sequence is NSNGSSGNES…AYSLLSASSE (68 aa). Over residues 116–132 the composition is skewed to polar residues; the sequence is QDNPSTSGCSSEQSARA. Residue threonine 121 is modified to Phosphothreonine; by CSNK1E. 2 positions are modified to phosphoserine; by CSNK1E: serine 122 and serine 126. The Nuclear export signal 1 motif lies at 138-147; it reads LMTALRELKL. PAS domains follow at residues 208–275 and 348–414; these read ITSE…PSRL and YEAP…KILQ. The PAC domain maps to 422 to 465; the sequence is HSPIRFCARNGEYVTMDTSWAGFVHPWSRKVAFVLGRHKVRTAP. Positions 489-498 match the Nuclear export signal 2 motif; the sequence is LSEQIHRLLL. Disordered stretches follow at residues 508–544 and 647–698; these read GLCG…PAPV and TKRK…KEPV. 2 stretches are compositionally biased toward low complexity: residues 513–533 and 652–662; these read GPLM…SNGG and ASSSSYTASSA. The tract at residues 596–815 is required for phosphorylation by CSNK1E; that stretch reads ELEVAPVPDQ…GLDTSSVAPS (220 aa). Phosphoserine is present on residues serine 661, serine 663, and serine 704. Disordered regions lie at residues 749–772, 809–873, and 938–1037; these read GLAP…TPDA, TSSV…PPAT, and SQAP…ALSG. The span at 751-769 shows a compositional bias: pro residues; that stretch reads APGPAPSPAPSPTVAPDPT. Position 815 is a phosphoserine (serine 815). Positions 824–840 match the Nuclear localization signal motif; the sequence is IPPGRRHHCRSKAKRSR. A compositionally biased stretch (basic residues) spans 827-846; that stretch reads GRRHHCRSKAKRSRHHHHQT. Composition is skewed to pro residues over residues 859-873 and 955-965; these read SPVP…PPAT and PSLPPPPLSPP. Positions 973–985 are enriched in polar residues; the sequence is FNSRCSSPLQLNL. Phosphoserine is present on residues serine 978 and serine 979. A Nuclear export signal 3 motif is present at residues 981-988; it reads LQLNLLQL. The LXXLL signature appears at 1042–1046; sequence LELLL. Low complexity predominate over residues 1051–1061; sequence RSGTGSAASGS. Disordered stretches follow at residues 1051–1099 and 1207–1291; these read RSGT…YFGS and SVQD…NSTS. Residues 1062–1076 show a composition bias toward gly residues; that stretch reads LGSGLGSGSGSGSHE. Over residues 1077 to 1094 the composition is skewed to low complexity; the sequence is GGSTSASITRSSQSSHTS. Positions 1148-1291 are CRY binding domain; that stretch reads SRDAASVLKQ…ALPAEENSTS (144 aa). The span at 1235–1248 shows a compositional bias: gly residues; that stretch reads GEGGGCGVGGGGGD. A compositionally biased stretch (polar residues) spans 1253–1267; it reads AQTQIGAKGSSSQDS.

As to quaternary structure, homodimer. Component of the circadian core oscillator, which includes the CRY proteins, CLOCK or NPAS2, BMAL1 or BMAL2, CSNK1D and/or CSNK1E, TIMELESS, and the PER proteins. Interacts directly with TIMELESS. Interacts directly with PER2, PER3, CRY1 and CRY2. Interacts with BMAL1 and CLOCK. Interacts with GPRASP1. Interacts (phosphorylated) with BTRC and FBXW11; the interactions trigger proteasomal degradation. Interacts with NONO and SFPQ. Interacts with WDR5. Interacts with U2AF1L4 (Isoform 3). Interacts with USP2. Interacts with HNF4A. Phosphorylated on serine residues by CSNK1D, CSNK1E and probably also by CSNK1G2. Phosphorylation by CSNK1D or CSNK1E promotes nuclear location of PER proteins as well as ubiquitination and subsequent degradation. May be dephosphorylated by PP1. In terms of processing, ubiquitinated; requires phosphorylation by CSNK1E and interaction with BTRC and FBXW11. Deubiquitinated by USP2. In brain, highest expression is observed in the SCN. Highly expressed in the pyramidal cell layer of the piriform cortex, the periventricular part of the caudate-putamen, many thalamic nuclei, and the granular layer of the cerebellar cortex. Weaker expression is detected in most area of the brain, including cortical and non cortical structures. Expression but no oscillations occurs in the glomerular and mitral cell layers of the olfactory bulb, the internal granular layer of the cerebellum, the cornu ammonis and dentate gyrus of the hippocampus, the cerebral and piriform cortices. Expressed in the renal cortex (at protein level). Also found in heart, brain, bladder, lumbar spinal cord, spleen, lung, liver, skeletal muscle and testis.

The protein resides in the nucleus. Its subcellular location is the cytoplasm. Its function is as follows. Transcriptional repressor which forms a core component of the circadian clock. The circadian clock, an internal time-keeping system, regulates various physiological processes through the generation of approximately 24 hour circadian rhythms in gene expression, which are translated into rhythms in metabolism and behavior. It is derived from the Latin roots 'circa' (about) and 'diem' (day) and acts as an important regulator of a wide array of physiological functions including metabolism, sleep, body temperature, blood pressure, endocrine, immune, cardiovascular, and renal function. Consists of two major components: the central clock, residing in the suprachiasmatic nucleus (SCN) of the brain, and the peripheral clocks that are present in nearly every tissue and organ system. Both the central and peripheral clocks can be reset by environmental cues, also known as Zeitgebers (German for 'timegivers'). The predominant Zeitgeber for the central clock is light, which is sensed by retina and signals directly to the SCN. The central clock entrains the peripheral clocks through neuronal and hormonal signals, body temperature and feeding-related cues, aligning all clocks with the external light/dark cycle. Circadian rhythms allow an organism to achieve temporal homeostasis with its environment at the molecular level by regulating gene expression to create a peak of protein expression once every 24 hours to control when a particular physiological process is most active with respect to the solar day. Transcription and translation of core clock components (CLOCK, NPAS2, BMAL1, BMAL2, PER1, PER2, PER3, CRY1 and CRY2) plays a critical role in rhythm generation, whereas delays imposed by post-translational modifications (PTMs) are important for determining the period (tau) of the rhythms (tau refers to the period of a rhythm and is the length, in time, of one complete cycle). A diurnal rhythm is synchronized with the day/night cycle, while the ultradian and infradian rhythms have a period shorter and longer than 24 hours, respectively. Disruptions in the circadian rhythms contribute to the pathology of cardiovascular diseases, cancer, metabolic syndromes and aging. A transcription/translation feedback loop (TTFL) forms the core of the molecular circadian clock mechanism. Transcription factors, CLOCK or NPAS2 and BMAL1 or BMAL2, form the positive limb of the feedback loop, act in the form of a heterodimer and activate the transcription of core clock genes and clock-controlled genes (involved in key metabolic processes), harboring E-box elements (5'-CACGTG-3') within their promoters. The core clock genes: PER1/2/3 and CRY1/2 which are transcriptional repressors form the negative limb of the feedback loop and interact with the CLOCK|NPAS2-BMAL1|BMAL2 heterodimer inhibiting its activity and thereby negatively regulating their own expression. This heterodimer also activates nuclear receptors NR1D1/2 and RORA/B/G, which form a second feedback loop and which activate and repress BMAL1 transcription, respectively. Regulates circadian target genes expression at post-transcriptional levels, but may not be required for the repression at transcriptional level. Controls PER2 protein decay. Represses CRY2 preventing its repression on CLOCK/BMAL1 target genes such as FXYD5 and SCNN1A in kidney and PPARA in liver. Besides its involvement in the maintenance of the circadian clock, has an important function in the regulation of several processes. Participates in the repression of glucocorticoid receptor NR3C1/GR-induced transcriptional activity by reducing the association of NR3C1/GR to glucocorticoid response elements (GREs) by BMAL1:CLOCK. Plays a role in the modulation of the neuroinflammatory state via the regulation of inflammatory mediators release, such as CCL2 and IL6. In spinal astrocytes, negatively regulates the MAPK14/p38 and MAPK8/JNK MAPK cascades as well as the subsequent activation of NFkappaB. Coordinately regulates the expression of multiple genes that are involved in the regulation of renal sodium reabsorption. Can act as gene expression activator in a gene and tissue specific manner, in kidney enhances WNK1 and SLC12A3 expression in collaboration with CLOCK. Modulates hair follicle cycling. Represses the CLOCK-BMAL1 induced transcription of BHLHE40/DEC1. The sequence is that of Period circadian protein homolog 1 (Per1) from Mus musculus (Mouse).